Here is a 360-residue protein sequence, read N- to C-terminus: Histidinol-phosphate aminotransferase (360 aa).

Lys211 is subject to N6-(pyridoxal phosphate)lysine.

It belongs to the class-II pyridoxal-phosphate-dependent aminotransferase family. Histidinol-phosphate aminotransferase subfamily. In terms of assembly, homodimer. The cofactor is pyridoxal 5'-phosphate.

The catalysed reaction is L-histidinol phosphate + 2-oxoglutarate = 3-(imidazol-4-yl)-2-oxopropyl phosphate + L-glutamate. It functions in the pathway amino-acid biosynthesis; L-histidine biosynthesis; L-histidine from 5-phospho-alpha-D-ribose 1-diphosphate: step 7/9. In Sodalis glossinidius (strain morsitans), this protein is Histidinol-phosphate aminotransferase.